The following is a 303-amino-acid chain: ATP phosphoribosyltransferase (303 aa).

It belongs to the ATP phosphoribosyltransferase family. Long subfamily. Mg(2+) serves as cofactor.

The protein resides in the cytoplasm. The enzyme catalyses 1-(5-phospho-beta-D-ribosyl)-ATP + diphosphate = 5-phospho-alpha-D-ribose 1-diphosphate + ATP. Its pathway is amino-acid biosynthesis; L-histidine biosynthesis; L-histidine from 5-phospho-alpha-D-ribose 1-diphosphate: step 1/9. With respect to regulation, feedback inhibited by histidine. Catalyzes the condensation of ATP and 5-phosphoribose 1-diphosphate to form N'-(5'-phosphoribosyl)-ATP (PR-ATP). Has a crucial role in the pathway because the rate of histidine biosynthesis seems to be controlled primarily by regulation of HisG enzymatic activity. The polypeptide is ATP phosphoribosyltransferase (Haemophilus influenzae (strain PittGG)).